The chain runs to 418 residues: MTLASMIEDIARRARTAARPLATASADTKNTVLAEIARGLAHGKREIEAENQKDLKAARDSGMSAAMIDRLTISDQTLESMIKGLNQVIALPDPVGRITGAWTRPNGLEISKRRIPLGVIAMIYESRPNVTVDAAALCLKAGNAAILRGGSEAFFSNTILARIIGNALETVGISRDSVQVLPVKDRQAITELLQQEAYIDLVIPRGGESLIRFVVKHSTIPVLKHYKGVCHVYVDETCNMDEAVDICINAKTQRPGVCNAMETLLVHERIAPLFLPRMAQAFSAAKVEMRGCPATLAMVPQALPADETDWSTEYLDLIVSVKIVKDLAQAMAHIAVFGSDHTDVIVTDIPENAETFINTVSSSMVGVNVSTRFNDGGELGLGAEIGISTSRLHAFGPMGLEELTSTKFVVVGKGQTRQ.

The protein belongs to the gamma-glutamyl phosphate reductase family.

It is found in the cytoplasm. It carries out the reaction L-glutamate 5-semialdehyde + phosphate + NADP(+) = L-glutamyl 5-phosphate + NADPH + H(+). It functions in the pathway amino-acid biosynthesis; L-proline biosynthesis; L-glutamate 5-semialdehyde from L-glutamate: step 2/2. In terms of biological role, catalyzes the NADPH-dependent reduction of L-glutamate 5-phosphate into L-glutamate 5-semialdehyde and phosphate. The product spontaneously undergoes cyclization to form 1-pyrroline-5-carboxylate. This is Gamma-glutamyl phosphate reductase from Desulforapulum autotrophicum (strain ATCC 43914 / DSM 3382 / VKM B-1955 / HRM2) (Desulfobacterium autotrophicum).